An 80-amino-acid polypeptide reads, in one-letter code: Conotoxin Bu14 (80 aa).

Residues 1 to 8 (AACQLGTA) form the signal peptide. A propeptide spanning residues 9-40 (ASFARDKQDYPAVRSDGRQDSKDSTLDRIAKR) is cleaved from the precursor. Disulfide bonds link C41–C55, C48–C59, and C54–C69.

It belongs to the conotoxin O1 superfamily. As to expression, expressed by the venom duct.

The protein resides in the secreted. The polypeptide is Conotoxin Bu14 (Conus bullatus (Bubble cone)).